A 510-amino-acid chain; its full sequence is Pectinesterase 2 (510 aa).

The signal sequence occupies residues 1–19 (MALRILITVSLVLFSLSHT). N-linked (GlcNAc...) asparagine glycans are attached at residues Asn110 and Asn158. Substrate is bound by residues Thr275 and Gln305. Asp328 acts as the Proton donor in catalysis. Cys342 and Cys362 form a disulfide bridge. Catalysis depends on Asp349, which acts as the Nucleophile. 2 N-linked (GlcNAc...) asparagine glycosylation sites follow: Asn371 and Asn385. 2 residues coordinate substrate: Arg416 and Trp418.

It in the N-terminal section; belongs to the PMEI family. In the C-terminal section; belongs to the pectinesterase family. Expressed at low levels in young leaves, young bark, young fruit, mature fruit vesicles, shoots and flower buds, young bark and juice vesicles. In both leaf and fruit abscission zones, and mature leaves, expression was initially undetectable but increased markedly following ethylene treatment.

It is found in the secreted. The protein localises to the cell wall. It catalyses the reaction [(1-&gt;4)-alpha-D-galacturonosyl methyl ester](n) + n H2O = [(1-&gt;4)-alpha-D-galacturonosyl](n) + n methanol + n H(+). It functions in the pathway glycan metabolism; pectin degradation; 2-dehydro-3-deoxy-D-gluconate from pectin: step 1/5. Acts in the modification of cell walls via demethylesterification of cell wall pectin. This is Pectinesterase 2 (PECS-2.1) from Citrus sinensis (Sweet orange).